We begin with the raw amino-acid sequence, 424 residues long: SWI/SNF and RSC complexes subunit arp42 (424 aa).

It belongs to the actin family. Component of the RSC complex composed of at least arp9, arp42, rsc1, rsc4, rsc7, rsc9, rsc58, sfh1, snf21, ssr1, ssr2, ssr3 and ssr4. The complex interacts with histone and histone variant components of centromeric chromatin. Component of the SWI/SNF global transcription activator complex composed of at least arp9, arp42, snf5, snf22, snf30, sbf59, sol1, ssr1, ssr2, ssr3, ssr4 and tfg3.

Its subcellular location is the cytoplasm. The protein localises to the nucleus. Functionally, component of the chromatin structure remodeling complex (RSC), which is involved in transcription regulation and nucleosome positioning. Controls particularly membrane and organelle development genes. Part of the SWI/SNF complex, an ATP-dependent chromatin remodeling complex, required for the positive and negative regulation of gene expression of a large number of genes. It changes chromatin structure by altering DNA-histone contacts within a nucleosome, leading eventually to a change in nucleosome position, thus facilitating or repressing binding of gene-specific transcription factors. The polypeptide is SWI/SNF and RSC complexes subunit arp42 (arp42) (Schizosaccharomyces pombe (strain 972 / ATCC 24843) (Fission yeast)).